Reading from the N-terminus, the 310-residue chain is Carbamate kinase 1 (310 aa).

It belongs to the carbamate kinase family.

Its subcellular location is the cytoplasm. It catalyses the reaction hydrogencarbonate + NH4(+) + ATP = carbamoyl phosphate + ADP + H2O + H(+). It functions in the pathway metabolic intermediate metabolism; carbamoyl phosphate degradation; CO(2) and NH(3) from carbamoyl phosphate: step 1/1. The protein is Carbamate kinase 1 (arcC1) of Staphylococcus aureus (strain MRSA252).